A 98-amino-acid chain; its full sequence is Large ribosomal subunit protein uL23 (98 aa).

The protein belongs to the universal ribosomal protein uL23 family. In terms of assembly, part of the 50S ribosomal subunit. Contacts protein L29, and trigger factor when it is bound to the ribosome.

Functionally, one of the early assembly proteins it binds 23S rRNA. One of the proteins that surrounds the polypeptide exit tunnel on the outside of the ribosome. Forms the main docking site for trigger factor binding to the ribosome. The polypeptide is Large ribosomal subunit protein uL23 (Bordetella bronchiseptica (strain ATCC BAA-588 / NCTC 13252 / RB50) (Alcaligenes bronchisepticus)).